The sequence spans 337 residues: Structural protein VP9 (337 aa).

It localises to the virion. Its subcellular location is the host cytoplasm. The polypeptide is Structural protein VP9 (Colorado tick fever virus (strain USA/Florio N-7180) (CTFV)).